Reading from the N-terminus, the 703-residue chain is Serotransferrin (703 aa).

Positions 1–19 are cleaved as a signal peptide; it reads MDLSLHVALCLGMLALCLA. Transferrin-like domains follow at residues 27–341 and 354–686; these read VRWC…ALKE and VRWC…SLNK. Intrachain disulfides connect Cys-30/Cys-65 and Cys-40/Cys-56. 2 residues coordinate Fe(3+): Asp-80 and Tyr-112. 3 cysteine pairs are disulfide-bonded: Cys-135-Cys-218, Cys-180-Cys-193, and Cys-246-Cys-260. 4 residues coordinate hydrogencarbonate: Thr-137, Lys-141, Ala-143, and Gly-144. Tyr-212 is a binding site for Fe(3+). His-268 lines the Fe(3+) pocket. The connecting region stretch occupies residues 341-350; the sequence is EGVKEDDLAA. 2 disulfide bridges follow: Cys-357/Cys-389 and Cys-367/Cys-380. Fe(3+)-binding residues include Asp-404 and Tyr-443. 7 disulfides stabilise this stretch: Cys-414–Cys-698, Cys-432–Cys-659, Cys-466–Cys-545, Cys-490–Cys-687, Cys-500–Cys-514, Cys-511–Cys-528, and Cys-585–Cys-599. The hydrogencarbonate site is built by Thr-468, Arg-472, Ala-474, and Gly-475. Residue Tyr-539 participates in Fe(3+) binding. Fe(3+) is bound at residue His-607.

The protein belongs to the transferrin family. As to quaternary structure, monomer. In terms of tissue distribution, plasma.

It localises to the secreted. Transferrins are iron binding transport proteins which can bind two Fe(3+) ions in association with the binding of an anion, usually bicarbonate. It is responsible for the transport of iron from sites of absorption and heme degradation to those of storage and utilization. Serum transferrin may also have a further role in stimulating cell proliferation. The polypeptide is Serotransferrin (tf) (Xenopus tropicalis (Western clawed frog)).